Here is a 195-residue protein sequence, read N- to C-terminus: Protein GrpE (195 aa).

Residues 1–14 (MQEPHDQEPIEKQK) are compositionally biased toward basic and acidic residues. The segment at 1-45 (MQEPHDQEPIEKQKLPGMDDVLETEHSGTVAGNTERAGEDAAPSL) is disordered.

This sequence belongs to the GrpE family. As to quaternary structure, homodimer.

It localises to the cytoplasm. Its function is as follows. Participates actively in the response to hyperosmotic and heat shock by preventing the aggregation of stress-denatured proteins, in association with DnaK and GrpE. It is the nucleotide exchange factor for DnaK and may function as a thermosensor. Unfolded proteins bind initially to DnaJ; upon interaction with the DnaJ-bound protein, DnaK hydrolyzes its bound ATP, resulting in the formation of a stable complex. GrpE releases ADP from DnaK; ATP binding to DnaK triggers the release of the substrate protein, thus completing the reaction cycle. Several rounds of ATP-dependent interactions between DnaJ, DnaK and GrpE are required for fully efficient folding. In Nitrosomonas europaea (strain ATCC 19718 / CIP 103999 / KCTC 2705 / NBRC 14298), this protein is Protein GrpE.